We begin with the raw amino-acid sequence, 1077 residues long: Semaphorin-5A (1077 aa).

The first 21 residues, 1–21 (MKGACILAWLFSSLGVWRLAR), serve as a signal peptide directing secretion. Residues 22–971 (PETQDPAKCQ…RCGEFNMFHM (950 aa)) are Extracellular-facing. The Sema domain occupies 35 to 484 (HPVVSYKEIG…LQEHVAKIPL (450 aa)). Intrachain disulfides connect Cys-104–Cys-114 and Cys-131–Cys-140. Asn-147, Asn-168, Asn-227, and Asn-277 each carry an N-linked (GlcNAc...) asparagine glycan. Disulfide bonds link Cys-254–Cys-357 and Cys-278–Cys-320. 2 N-linked (GlcNAc...) asparagine glycosylation sites follow: Asn-323 and Asn-367. 2 disulfides stabilise this stretch: Cys-487–Cys-504 and Cys-496–Cys-513. Asn-536 and Asn-591 each carry an N-linked (GlcNAc...) asparagine glycan. TSP type-1 domains are found at residues 540-593 (DGSF…TNCS), 595-651 (NGGW…LLCP), 653-702 (HVFW…NACP), 707-765 (TTPW…GCST), 784-839 (NGAW…LPCP), 841-896 (DGVW…QTCP), and 897-944 (ESWS…VFDS). Intrachain disulfides connect Cys-607-Cys-644, Cys-611-Cys-650, Cys-622-Cys-634, Cys-665-Cys-696, Cys-669-Cys-701, and Cys-680-Cys-686. A glycan (N-linked (GlcNAc...) asparagine) is linked at Asn-717. 6 disulfides stabilise this stretch: Cys-796–Cys-833, Cys-800–Cys-838, Cys-811–Cys-823, Cys-853–Cys-890, Cys-857–Cys-895, and Cys-868–Cys-880. N-linked (GlcNAc...) asparagine glycosylation occurs at Asn-933. Residues 972–992 (FHMMAVGLSSSILGCLLTLLV) traverse the membrane as a helical segment. Residues 993-1077 (YTYCQRYQQQ…FTDLNNYDEY (85 aa)) lie on the Cytoplasmic side of the membrane.

It belongs to the semaphorin family. In terms of assembly, binds PLXNB3. As to expression, in adult, detected in liver, brain, kidney, heart, lung and spleen.

It localises to the membrane. Functionally, bifunctional axonal guidance cue regulated by sulfated proteoglycans; attractive effects result from interactions with heparan sulfate proteoglycans (HSPGs), while the inhibitory effects depend on interactions with chondroitin sulfate proteoglycans (CSPGs). Ligand for receptor PLXNB3. In glioma cells, SEMA5A stimulation of PLXNB3 results in the disassembly of F-actin stress fibers, disruption of focal adhesions and cellular collapse as well as inhibition of cell migration and invasion through ARHGDIA-mediated inactivation of RAC1. May promote angiogenesis by increasing endothelial cell proliferation and migration and inhibiting apoptosis. The polypeptide is Semaphorin-5A (Sema5a) (Mus musculus (Mouse)).